Consider the following 234-residue polypeptide: Glucosamine-6-phosphate deaminase (234 aa).

Aspartate 62 serves as the catalytic Proton acceptor; for enolization step. The active-site For ring-opening step is asparagine 128. Histidine 130 acts as the Proton acceptor; for ring-opening step in catalysis. The active-site For ring-opening step is the glutamate 135.

Belongs to the glucosamine/galactosamine-6-phosphate isomerase family. NagB subfamily.

The catalysed reaction is alpha-D-glucosamine 6-phosphate + H2O = beta-D-fructose 6-phosphate + NH4(+). It functions in the pathway amino-sugar metabolism; N-acetylneuraminate degradation; D-fructose 6-phosphate from N-acetylneuraminate: step 5/5. Catalyzes the reversible isomerization-deamination of glucosamine 6-phosphate (GlcN6P) to form fructose 6-phosphate (Fru6P) and ammonium ion. The sequence is that of Glucosamine-6-phosphate deaminase from Streptococcus suis (strain 98HAH33).